The chain runs to 121 residues: Two-component response regulator ORR12 (121 aa).

The 117-residue stretch at His5 to Ile121 folds into the Response regulatory domain. Residue Asp55 is modified to 4-aspartylphosphate.

The protein belongs to the ARR family. Type-A subfamily. Two-component system major event consists of a His-to-Asp phosphorelay between a sensor histidine kinase (HK) and a response regulator (RR). In plants, the His-to-Asp phosphorelay involves an additional intermediate named Histidine-containing phosphotransfer protein (HPt). This multistep phosphorelay consists of a His-Asp-His-Asp sequential transfer of a phosphate group between first a His and an Asp of the HK protein, followed by the transfer to a conserved His of the HPt protein and finally the transfer to an Asp in the receiver domain of the RR protein. As to expression, expressed in flowers and panicles.

Functionally, functions as a response regulator involved in His-to-Asp phosphorelay signal transduction system. Phosphorylation of the Asp residue in the receiver domain activates the ability of the protein to promote the transcription of target genes. Type-A response regulators seem to act as negative regulators of the cytokinin signaling. The protein is Two-component response regulator ORR12 of Oryza sativa subsp. japonica (Rice).